We begin with the raw amino-acid sequence, 179 residues long: Large ribosomal subunit protein uL5 (179 aa).

The protein belongs to the universal ribosomal protein uL5 family. Part of the 50S ribosomal subunit; part of the 5S rRNA/L5/L18/L25 subcomplex. Contacts the 5S rRNA and the P site tRNA. Forms a bridge to the 30S subunit in the 70S ribosome.

Functionally, this is one of the proteins that bind and probably mediate the attachment of the 5S RNA into the large ribosomal subunit, where it forms part of the central protuberance. In the 70S ribosome it contacts protein S13 of the 30S subunit (bridge B1b), connecting the 2 subunits; this bridge is implicated in subunit movement. Contacts the P site tRNA; the 5S rRNA and some of its associated proteins might help stabilize positioning of ribosome-bound tRNAs. In Alcanivorax borkumensis (strain ATCC 700651 / DSM 11573 / NCIMB 13689 / SK2), this protein is Large ribosomal subunit protein uL5.